The following is a 749-amino-acid chain: Semaphorin-3B (749 aa).

The first 24 residues, 1–24 (MGRAGAAAVIPGLALLWAVGLGSA), serve as a signal peptide directing secretion. In terms of domain architecture, Sema spans 30 to 513 (RLRLSFQELQ…SRSAVAQIAL (484 aa)). An N-linked (GlcNAc...) asparagine glycan is attached at N82. Cysteines 102 and 113 form a disulfide. Residue N124 is glycosylated (N-linked (GlcNAc...) asparagine). Disulfide bonds link C131–C140, C269–C380, and C293–C340. N427 carries N-linked (GlcNAc...) asparagine glycosylation. 2 disulfide bridges follow: C516–C534 and C644–C710. The region spanning 573 to 659 (PALLEHKVFG…GFTQPLRRLS (87 aa)) is the Ig-like C2-type domain. Residues 702-749 (GSANSLRMCRPQPALQSLPLESRRKGRNRRTHAPEPRAERGPRSATHW) form a disordered region. Residues 733–743 (HAPEPRAERGP) show a composition bias toward basic and acidic residues.

Belongs to the semaphorin family. As to expression, expressed abundantly but differentially in a variety of neural and nonneural tissues.

Its subcellular location is the secreted. The protein localises to the endoplasmic reticulum. Its function is as follows. Inhibits axonal extension by providing local signals to specify territories inaccessible for growing axons. This chain is Semaphorin-3B (SEMA3B), found in Homo sapiens (Human).